The primary structure comprises 185 residues: Elongation factor P (185 aa).

The protein belongs to the elongation factor P family.

The protein resides in the cytoplasm. The protein operates within protein biosynthesis; polypeptide chain elongation. Its function is as follows. Involved in peptide bond synthesis. Stimulates efficient translation and peptide-bond synthesis on native or reconstituted 70S ribosomes in vitro. Probably functions indirectly by altering the affinity of the ribosome for aminoacyl-tRNA, thus increasing their reactivity as acceptors for peptidyl transferase. In Streptococcus equi subsp. equi (strain 4047), this protein is Elongation factor P.